Consider the following 390-residue polypeptide: Digeranylgeranylglycerophospholipid reductase (390 aa).

10 residues coordinate FAD: Ala18, Glu37, Cys48, Ala49, Ala51, Arg98, Val122, Asp278, Gly290, and Ile291. Val368 serves as a coordination point for a 2,3-bis-O-(geranylgeranyl)-sn-glycerol 1-phospholipid.

It belongs to the geranylgeranyl reductase family. DGGGPL reductase subfamily. The cofactor is FAD.

The catalysed reaction is a 2,3-bis-O-phytanyl-sn-glycerol 1-phospholipid + 8 A = a 2,3-bis-O-(geranylgeranyl)-sn-glycerol 1-phospholipid + 8 AH2. It catalyses the reaction 2,3-bis-O-(phytanyl)-sn-glycerol 1-phosphate + 8 A = 2,3-bis-O-(geranylgeranyl)-sn-glycerol 1-phosphate + 8 AH2. The enzyme catalyses CDP-2,3-bis-O-(geranylgeranyl)-sn-glycerol + 8 AH2 = CDP-2,3-bis-O-(phytanyl)-sn-glycerol + 8 A. It carries out the reaction archaetidylserine + 8 AH2 = 2,3-bis-O-phytanyl-sn-glycero-3-phospho-L-serine + 8 A. The protein operates within membrane lipid metabolism; glycerophospholipid metabolism. Functionally, is involved in the reduction of 2,3-digeranylgeranylglycerophospholipids (unsaturated archaeols) into 2,3-diphytanylglycerophospholipids (saturated archaeols) in the biosynthesis of archaeal membrane lipids. Catalyzes the formation of archaetidic acid (2,3-di-O-phytanyl-sn-glyceryl phosphate) from 2,3-di-O-geranylgeranylglyceryl phosphate (DGGGP) via the hydrogenation of each double bond of the isoprenoid chains. Is also probably able to reduce double bonds of geranyl groups in CDP-2,3-bis-O-(geranylgeranyl)-sn-glycerol and archaetidylserine, thus acting at various stages in the biosynthesis of archaeal membrane lipids. The protein is Digeranylgeranylglycerophospholipid reductase of Methanococcus maripaludis (strain C5 / ATCC BAA-1333).